A 354-amino-acid chain; its full sequence is Uroporphyrinogen decarboxylase (354 aa).

Substrate contacts are provided by residues 25–29 (RQAGR), Asp75, Tyr152, Thr207, and His330.

Belongs to the uroporphyrinogen decarboxylase family. As to quaternary structure, homodimer.

The protein resides in the cytoplasm. It catalyses the reaction uroporphyrinogen III + 4 H(+) = coproporphyrinogen III + 4 CO2. It functions in the pathway porphyrin-containing compound metabolism; protoporphyrin-IX biosynthesis; coproporphyrinogen-III from 5-aminolevulinate: step 4/4. Its function is as follows. Catalyzes the decarboxylation of four acetate groups of uroporphyrinogen-III to yield coproporphyrinogen-III. The sequence is that of Uroporphyrinogen decarboxylase from Xanthomonas oryzae pv. oryzae (strain PXO99A).